The sequence spans 311 residues: Ribonuclease HIII (311 aa).

An RNase H type-2 domain is found at 95–311 (MSIVGSDEVG…NTEKAFRLLK (217 aa)). Residues D101, E102, and D206 each coordinate a divalent metal cation.

It belongs to the RNase HII family. RnhC subfamily. Mn(2+) is required as a cofactor. The cofactor is Mg(2+).

The protein resides in the cytoplasm. It catalyses the reaction Endonucleolytic cleavage to 5'-phosphomonoester.. In terms of biological role, endonuclease that specifically degrades the RNA of RNA-DNA hybrids. This is Ribonuclease HIII from Bacillus anthracis (strain A0248).